The chain runs to 898 residues: Chloride channel protein 2 (898 aa).

Ala-2 bears the N-acetylalanine mark. Over 2-87 (AAAAAEEGME…RCHKFLVSRV (86 aa)) the chain is Cytoplasmic. The interval 16–34 (QYEQTLMYGRYTQDLGAFA) is essential for channel gating by both voltage and cell volume. Thr-20 carries the post-translational modification Phosphothreonine. Residues 36 to 49 (EEAARIRLGGPEPW) are modulates channel gating by both voltage and cell volume. The next 2 helical transmembrane spans lie at 88-121 (GEDW…AQQW) and 130-155 (ILLQ…TQIL). A Selectivity filter part_1 motif is present at residues 161 to 165 (GSGIP). Ser-162 is a binding site for chloride. An intramembrane region (helical) is located at residues 164 to 171 (IPEMKTIL). The next 2 helical transmembrane spans lie at 180–198 (LTLK…ALGS) and 205–223 (EGPF…SKFL). The Selectivity filter part_2 signature appears at 203 to 207 (GKEGP). 2 intramembrane regions (helical) span residues 239–251 (MLAA…VGCC) and 255–263 (PIGGVLFSI). 5 helical membrane-spanning segments follow: residues 275–295 (YWRG…LAVW), 321–349 (LPAF…VQVM), 358–377 (FLMR…ISTL), 429–449 (ANVF…SALA), and 457–480 (GAFM…MAAW). The Selectivity filter part_3 signature appears at 457–461 (GAFMP). Residue Phe-459 coordinates chloride. Positions 497–511 (GGYAVVGAAALAGAV) form an intramembrane region, helical. The segment at residues 512 to 513 (TH) is an intramembrane region (note=Loop between two helices). Positions 514 to 525 (TVSTAVIVFELT) form an intramembrane region, helical. An intramembrane region (note=Loop between two helices) is located at residues 526-530 (GQIAH). Residues 531–548 (ILPVMIAVILANAVAQSL) form a helical membrane-spanning segment. Residues 549–898 (QPSLYDSIIR…SPSDSDDKCQ (350 aa)) are Cytoplasmic-facing. Chloride is bound at residue Tyr-553. The region spanning 584–642 (MVRDVPHVALSCTFRDLRLALHRTKGRMLALVESPESMILLGSIERSQVVALLGAQLSP) is the CBS 1 domain. Disordered regions lie at residues 643–672 (ARRR…PEAS) and 686–717 (AARG…TGSA). Residues 705 to 717 (VTRNLGESPTGSA) are compositionally biased toward polar residues. Phosphoserine occurs at positions 712 and 758. The region spanning 790-850 (IDPAPFQLVE…GSVTAQGVKV (61 aa)) is the CBS 2 domain. The short motif at 812-813 (LL) is the Basolateral membrane sorting element. A disordered region spans residues 856–898 (SFRDSATSSSDTETTEVHALWGPHSRHGLPREGSPSDSDDKCQ).

Belongs to the chloride channel (TC 2.A.49) family. ClC-2/CLCN2 subfamily. Homodimer. Interacts with auxiliary subunit HEPACAM. Phosphorylated. Activated by dephosphorylation. As to expression, ubiquitously expressed. Moderately expressed in aortic and coronary vascular smooth muscle cells and expressed at a low level in aortic endothelial cells. Expressed in the adrenal gland, predominantly in the zona glomerulosa. Expressed in white mater perivascular astrocytes and ependymal cells (at protein level).

The protein localises to the cell membrane. It localises to the basolateral cell membrane. Its subcellular location is the cell projection. The protein resides in the dendritic spine membrane. It is found in the axon. It catalyses the reaction chloride(in) = chloride(out). The catalysed reaction is thiocyanate(in) = thiocyanate(out). It carries out the reaction bromide(in) = bromide(out). The enzyme catalyses nitrate(in) = nitrate(out). It catalyses the reaction iodide(out) = iodide(in). Its activity is regulated as follows. Common gate kinetics are down-regulated by intracellular ATP. Inhibited by AK-42, a derivative of meclofenamate. Inhibited by Cd(2+). Inhibited by Zn(2+) and PKC activation. Inhibited at acidic pH. CCLN2:HEPACAM channel conductance is up-regulated upon hypo-osmolarity. Its function is as follows. Voltage-gated and osmosensitive chloride channel. Forms a homodimeric channel where each subunit has its own ion conduction pathway. Conducts double-barreled currents controlled by two types of gates, two fast glutamate gates that control each subunit independently and a slow common gate that opens and shuts off both subunits simultaneously. Displays inward rectification currents activated upon membrane hyperpolarization and extracellular hypotonicity. Contributes to chloride conductance involved in neuron excitability. In hippocampal neurons, generates a significant part of resting membrane conductance and provides an additional chloride efflux pathway to prevent chloride accumulation in dendrites upon GABA receptor activation. In glia, associates with the auxiliary subunit HEPACAM/GlialCAM at astrocytic processes and myelinated fiber tracts where it may regulate transcellular chloride flux buffering extracellular chloride and potassium concentrations. Regulates aldosterone production in adrenal glands. The opening of CLCN2 channels at hyperpolarized membrane potentials in the glomerulosa causes cell membrane depolarization, activation of voltage-gated calcium channels and increased expression of aldosterone synthase, the rate-limiting enzyme for aldosterone biosynthesis. Contributes to chloride conductance in retinal pigment epithelium involved in phagocytosis of shed photoreceptor outer segments and photoreceptor renewal. Conducts chloride currents at the basolateral membrane of epithelial cells with a role in chloride reabsorption rather than secretion. Permeable to small monovalent anions with chloride &gt; thiocyanate &gt; bromide &gt; nitrate &gt; iodide ion selectivity. The protein is Chloride channel protein 2 of Homo sapiens (Human).